The chain runs to 3564 residues: CUB and sushi domain-containing protein 1 (3564 aa).

The signal sequence occupies residues 1–26 (MTAWRRFQSLLLLLGLLVLCARLLTA). The Extracellular segment spans residues 27–3487 (AKGQNCGGLV…SHYHGTSSGS (3461 aa)). Intrachain disulfides connect C32–C58, C145–C185, C171–C202, C208–C234, C349–C389, C375–C406, C411–C437, C527–C567, C553–C580, and C584–C610. A CUB 1 domain is found at 32-140 (CGGLVQGPNG…QGFKALYEVL (109 aa)). 2 N-linked (GlcNAc...) asparagine glycosylation sites follow: N40 and N57. The region spanning 143–204 (HTCGNPGEIL…WDFPAPFCRA (62 aa)) is the Sushi 1 domain. The 105-residue stretch at 208–312 (CGGTLRGTSS…KGFNAQFQVK (105 aa)) folds into the CUB 2 domain. The 62-residue stretch at 347 to 408 (DMCPDPGIPE…WSDHRPICRA (62 aa)) folds into the Sushi 2 domain. In terms of domain architecture, CUB 3 spans 411–522 (CGSNLRGPSG…PGFKAVYQEI (112 aa)). Residues 525–582 (GGCGDPGIPAYGKRTGSSFLHGDTLTFECPAAFELVGERVITCQQNNQWSGNKPSCVF) enclose the Sushi 3 domain. In terms of domain architecture, CUB 4 spans 584–692 (CFFNFTASSG…RGFNITYTTF (109 aa)). N-linked (GlcNAc...) asparagine glycans are attached at residues N587 and N686. One can recognise a Sushi 4 domain in the interval 695 to 756 (NECHDPGIPI…WSSTVPRCEA (62 aa)). Disulfide bonds link C697-C738, C723-C754, C758-C784, C873-C913, C899-C926, and C930-C956. A CUB 5 domain is found at 758–866 (CGGHLTASSG…IGFLIHYESV (109 aa)). In terms of domain architecture, Sushi 5 spans 871–928 (DSCLDPGIPVNGHRHGGDFGIRSTVTFSCDPGYTLSDDEPLVCERNHQWNHALPSCDA). A CUB 6 domain is found at 930–1040 (CGGYIQGKSG…EGFNITFSEY (111 aa)). 3 N-linked (GlcNAc...) asparagine glycosylation sites follow: N955, N1015, and N1034. One can recognise a Sushi 6 domain in the interval 1043–1102 (EPCDDPGVPAFSRRIGFHFGVGDSLTFSCFLGYRLEGATKLTCLGGGRRVWSAPLPRCVA). Disulfide bonds link C1045–C1085, C1071–C1100, and C1104–C1130. The CUB 7 domain occupies 1104–1212 (CGASVKGNEG…QGFQLTYTSF (109 aa)). N-linked (GlcNAc...) asparagine glycans are attached at residues N1184 and N1197. Residues 1215–1275 (VKCEDPGIPN…WDKPLPSCIA (61 aa)) enclose the Sushi 7 domain. Disulfide bonds link C1217/C1258, C1244/C1273, C1277/C1304, C1391/C1431, C1417/C1447, C1451/C1477, C1564/C1604, C1590/C1621, C1625/C1651, C1741/C1781, C1767/C1798, and C1802/C1828. Residues 1277–1386 (CGGQIHAATS…SGFSIQFSTS (110 aa)) enclose the CUB 8 domain. In terms of domain architecture, Sushi 8 spans 1389-1449 (ATCNDPGMPQ…WQPDPPTCIA (61 aa)). N-linked (GlcNAc...) asparagine glycosylation occurs at N1399. The CUB 9 domain occupies 1451–1559 (CGGNLTGPAG…SGFAIEFKEK (109 aa)). N-linked (GlcNAc...) asparagine glycans are attached at residues N1454 and N1572. The region spanning 1562-1623 (EACFDPGNIM…WDQVLPSCNA (62 aa)) is the Sushi 9 domain. The 109-residue stretch at 1625–1733 (CGGQYTGSEG…RGFHFVYQAV (109 aa)) folds into the CUB 10 domain. A glycan (N-linked (GlcNAc...) asparagine) is linked at N1644. In terms of domain architecture, Sushi 10 spans 1739–1800 (TQCSSVPEPR…WNDTIPSCVV (62 aa)). Residues N1792, N1805, and N1882 are each glycosylated (N-linked (GlcNAc...) asparagine). One can recognise a CUB 11 domain in the interval 1802 to 1910 (CSGNFTQRRG…AGFHLEYKTV (109 aa)). Residues 1913–1972 (AACQEPALPSNSIKIGDRYMVNDVLSFQCEPGYTLQGRSHISCMPGTVRRWNYPSPLCIA) enclose the Sushi 11 domain. Cystine bridges form between C1915–C1955, C1941–C1970, and C1974–C2000. Positions 1974–2082 (CGGTLSTLGG…QGFKLAYQAY (109 aa)) constitute a CUB 12 domain. N2018 carries an N-linked (GlcNAc...) asparagine glycan. Residues 2085 to 2144 (QNCPDPPPFQNGYMINSDYSVGQSVSFECYPGYILIGHPVLTCQHGINRNWNYPFPRCDA) form the Sushi 12 domain. Cystine bridges form between C2087/C2127, C2113/C2142, and C2146/C2172. Positions 2146 to 2257 (CGYNVTSQNG…LNFHAFQLKK (112 aa)) constitute a CUB 13 domain. N-linked (GlcNAc...) asparagine glycosylation is found at N2149, N2154, and N2187. Residues 2256 to 2317 (KKCQPPPAVP…FEGSLPTCEA (62 aa)) form the Sushi 13 domain. 3 disulfide bridges follow: C2258/C2300, C2286/C2315, and C2319/C2347. The 112-residue stretch at 2319–2430 (CPANEVRTGS…KGFKIRYAAP (112 aa)) folds into the CUB 14 domain. N-linked (GlcNAc...) asparagine glycosylation is found at N2358, N2394, N2400, N2445, N2470, and N2503. 15 consecutive Sushi domains span residues 2430–2492 (PYCS…LCQA), 2493–2554 (VSCG…TCKP), 2555–2619 (VACP…SCRV), 2620–2677 (ISCG…RCLA), 2678–2735 (GHCG…VCVP), 2736–2793 (ITCG…TCRV), 2794–2856 (VNCS…KCLA), 2857–2914 (ISCG…HCTG), 2918–2975 (GFCG…VCEA), 2976–3034 (VSCG…DCTI), 3035–3094 (ISCG…VCKA), 3095–3152 (VLCP…QCLP), 3153–3210 (VFCG…TCID), 3214–3272 (NTCP…ECIP), and 3273–3332 (HACR…VCKS). Intrachain disulfides connect C2432–C2473, C2459–C2490, C2495–C2537, C2521–C2552, C2557–C2602, C2588–C2617, C2622–C2662, C2648–C2675, C2680–C2720, C2706–C2733, C2738–C2778, and C2764–C2791. N2605 carries an N-linked (GlcNAc...) asparagine glycan. N-linked (GlcNAc...) asparagine glycans are attached at residues N2750 and N2761. A glycan (N-linked (GlcNAc...) asparagine) is linked at N2795. Cystine bridges form between C2796–C2841, C2827–C2854, C2859–C2899, C2885–C2912, C2920–C2960, C2946–C2973, C2978–C3019, C3005–C3032, C3037–C3079, C3063–C3092, C3097–C3137, C3123–C3150, C3155–C3195, C3181–C3208, C3216–C3257, C3243–C3270, C3275–C3317, and C3302–C3330. N2894 is a glycosylation site (N-linked (GlcNAc...) asparagine). N-linked (GlcNAc...) asparagine glycosylation is present at N2963. Residues N3022 and N3056 are each glycosylated (N-linked (GlcNAc...) asparagine). N-linked (GlcNAc...) asparagine glycosylation is present at N3105. 2 N-linked (GlcNAc...) asparagine glycosylation sites follow: N3228 and N3260. N3339, N3379, and N3386 each carry an N-linked (GlcNAc...) asparagine glycan. Residues 3488 to 3508 (VAAAILVPFFALILSGFAFYL) traverse the membrane as a helical segment. Residues 3509 to 3564 (YKHRTRPKVQYNGYAGHENSNGQASFENPMYDTNLKPTEAKAVRFDTTLNTVCTVV) are Cytoplasmic-facing.

Belongs to the CSMD family. In terms of tissue distribution, weakly expressed in most tissues, except in brain. Expressed at intermediate level in brain, including cerebellum, substantia nigra, hippocampus and fetal brain.

It is found in the membrane. In terms of biological role, potential suppressor of squamous cell carcinomas. In Homo sapiens (Human), this protein is CUB and sushi domain-containing protein 1 (CSMD1).